A 246-amino-acid chain; its full sequence is Receptor-transporting protein 4 (246 aa).

Residues 1–224 lie on the Cytoplasmic side of the membrane; sequence MVVDFWTWEQ…EKLGPSRDPD (224 aa). The 3CxxC-type zinc finger occupies 48 to 159; sequence RAFGWFRCSS…DTANCEACTL (112 aa). Residues 225 to 245 form a helical membrane-spanning segment; that stretch reads PLNICVFILLLVFIVVKCFTS.

Belongs to the TMEM7 family. Interacts with TASR16. Interacts with OPRD1 and OPRM1; the interaction promotes cell surface localization of the OPDR1-OPRM1 heterodimer. In terms of assembly, (Microbial infection) Interacts with influenza A virus protein NS1; this interaction sequesters NS1 from interacting with RIG-I/DDX58 to restore antiviral signaling. In terms of tissue distribution, expressed in circumvallate papillae and testis.

The protein localises to the membrane. Its subcellular location is the cytoplasm. Its function is as follows. Chaperone protein that facilitates the trafficking and functional cell surface expression of some G-protein coupled receptors (GPCRs). Promotes functional expression of the bitter taste receptor TAS2R16. Also promotes functional expression of the opioid receptor heterodimer OPRD1-OPRM1. In addition, acts as a potent IFN-inducible suppressor of pathogens including lyssavirus rabies, influenza A or yellow fever virus. Mechanistically, associates with the viral replicase, binds viral RNA, and thereby suppresses viral genome amplification that replicates at the endoplasmic reticulum. In addition, restores antiviral signaling by interacting with and sequestering influenza A virus protein NS1. The protein is Receptor-transporting protein 4 (RTP4) of Homo sapiens (Human).